A 111-amino-acid chain; its full sequence is Probable 4-amino-4-deoxy-L-arabinose-phosphoundecaprenol flippase subunit ArnE (111 aa).

3 consecutive transmembrane segments (helical) span residues 38–58 (LWLG…LLVL), 61–81 (LPVG…TLAA), and 91–111 (PRHW…GSAA). In terms of domain architecture, EamA spans 40–109 (LGLALICMGA…IISGIIILGS (70 aa)).

The protein belongs to the ArnE family. Heterodimer of ArnE and ArnF.

The protein localises to the cell inner membrane. The protein operates within bacterial outer membrane biogenesis; lipopolysaccharide biosynthesis. In terms of biological role, translocates 4-amino-4-deoxy-L-arabinose-phosphoundecaprenol (alpha-L-Ara4N-phosphoundecaprenol) from the cytoplasmic to the periplasmic side of the inner membrane. The chain is Probable 4-amino-4-deoxy-L-arabinose-phosphoundecaprenol flippase subunit ArnE from Salmonella heidelberg (strain SL476).